We begin with the raw amino-acid sequence, 403 residues long: MASALRPPRVPKPKGVLPSHYYESFLEKKGPCDRDYKKFWAGLQGLTIYFYNSNRDFQHVEKLNLGAFEKLTDEIPWGSSRDPGTHFSLILRDQEIKFKVETLECREMWKGFILTVVELRVPTDLTLLPGHLYMMSEVLAKEEARRALETPSCFLKVSRLEAQLLLERYPECGNLLLRPSGDGADGVSVTTRQMHNGTHVVRHYKVKREGPKYVIDVEQPFSCTSLDAVVNYFVSHTKKALVPFLLDEDYEKVLGYVEADKENGENVWVAPSAPGPGPAPCTGGPKPLSPASSQDKLPPLPPLPNQEENYVTPIGDGPAVDYENQDVASSSWPVILKPKKLPKPPAKLPKPPVGPKPEPKVFNGGLGRKLPVSSAQPLFPTAGLADMTAELQKKLEKRRALEH.

Positions 18-130 constitute a PH domain; it reads PSHYYESFLE…VPTDLTLLPG (113 aa). The residue at position 22 (Y22) is a Phosphotyrosine; by SRC. The region spanning 133–248 is the SH2 domain; that stretch reads YMMSEVLAKE…KALVPFLLDE (116 aa). Y250 is subject to Phosphotyrosine; by PTK6. The disordered stretch occupies residues 270–308; that stretch reads APSAPGPGPAPCTGGPKPLSPASSQDKLPPLPPLPNQEE. Y310 carries the phosphotyrosine modification. Y322 carries the post-translational modification Phosphotyrosine; by SRC. The interval 331–374 is disordered; it reads SWPVILKPKKLPKPPAKLPKPPVGPKPEPKVFNGGLGRKLPVSS. The span at 343-356 shows a compositional bias: pro residues; that stretch reads KPPAKLPKPPVGPK. Positions 382–402 form a coiled coil; the sequence is AGLADMTAELQKKLEKRRALE.

In terms of assembly, interacts with PTK6 and CSF1R. Phosphorylated on tyrosine. Tyr-250 may be important for interaction with kinases. Phosphorylated by PTK6 at Tyr-250 modulates PTK6-mediated STAT3 activation. Tyr-22 and Tyr-322 appears to be phosphorylated by SRC. In terms of tissue distribution, widely expressed.

It is found in the cytoplasm. In terms of biological role, substrate of protein kinase PTK6. May play a regulatory role in the acute-phase response in systemic inflammation and may modulate STAT3 activity. The polypeptide is Signal-transducing adaptor protein 2 (STAP2) (Homo sapiens (Human)).